The primary structure comprises 186 residues: Probable peptidyl-tRNA hydrolase 2 (186 aa).

It belongs to the PTH2 family.

The enzyme catalyses an N-acyl-L-alpha-aminoacyl-tRNA + H2O = an N-acyl-L-amino acid + a tRNA + H(+). Functionally, the natural substrate for this enzyme may be peptidyl-tRNAs which drop off the ribosome during protein synthesis. This Drosophila melanogaster (Fruit fly) protein is Probable peptidyl-tRNA hydrolase 2.